We begin with the raw amino-acid sequence, 397 residues long: Elongation factor Tu (397 aa).

One can recognise a tr-type G domain in the interval K10–V206. Positions G19–T26 are G1. Residue G19–T26 coordinates GTP. Residue T26 coordinates Mg(2+). The G2 stretch occupies residues G62–S66. Residues D83–G86 form a G3 region. Residues D83–H87 and N138–D141 each bind GTP. The G4 stretch occupies residues N138–D141. The G5 stretch occupies residues S176–L178.

The protein belongs to the TRAFAC class translation factor GTPase superfamily. Classic translation factor GTPase family. EF-Tu/EF-1A subfamily. In terms of assembly, monomer.

Its subcellular location is the cytoplasm. The catalysed reaction is GTP + H2O = GDP + phosphate + H(+). Functionally, GTP hydrolase that promotes the GTP-dependent binding of aminoacyl-tRNA to the A-site of ribosomes during protein biosynthesis. The chain is Elongation factor Tu from Acidothermus cellulolyticus (strain ATCC 43068 / DSM 8971 / 11B).